The chain runs to 89 residues: Small ribosomal subunit protein bS20 (89 aa).

Disordered regions lie at residues 1-25 (MANI…ASMK) and 69-89 (KNAA…IQAS). Residues 7-20 (AIKRAKTSEKRRAH) show a composition bias toward basic residues.

The protein belongs to the bacterial ribosomal protein bS20 family.

Its function is as follows. Binds directly to 16S ribosomal RNA. This Geobacillus kaustophilus (strain HTA426) protein is Small ribosomal subunit protein bS20.